Here is a 194-residue protein sequence, read N- to C-terminus: dCTP deaminase (194 aa).

DCTP contacts are provided by residues 110–115 (RSSLAR), D128, 136–138 (VLE), Y171, K178, and Q182. Catalysis depends on E138, which acts as the Proton donor/acceptor.

Belongs to the dCTP deaminase family. Homotrimer.

It carries out the reaction dCTP + H2O + H(+) = dUTP + NH4(+). It functions in the pathway pyrimidine metabolism; dUMP biosynthesis; dUMP from dCTP (dUTP route): step 1/2. In terms of biological role, catalyzes the deamination of dCTP to dUTP. This chain is dCTP deaminase, found in Histophilus somni (strain 2336) (Haemophilus somnus).